The following is a 461-amino-acid chain: Armadillo repeat-containing X-linked protein 1 (461 aa).

Residues 1–6 (MGRTRE) are Mitochondrial intermembrane-facing. 2 mitochondrion outer membrane (MOM)-targeting sequence regions span residues 1–6 (MGRTRE) and 26–36 (RLTWGKDENEK). The chain crosses the membrane as a helical; Signal-anchor span at residues 7-29 (AGCVAAGMVIGAGACYCVYRLTW). The Cytoplasmic portion of the chain corresponds to 30 to 461 (GKDENEKLWD…VKVLKVLTKL (432 aa)). Disordered stretches follow at residues 34-110 (NEKL…HSEG) and 148-192 (SSLP…PATA). Over residues 38-51 (WDDEDEEEEEEEES) the composition is skewed to acidic residues. Residues 96–110 (PDVKKEVYPESHSEG) show a composition bias toward basic and acidic residues. Positions 167–185 (SRARNRTSGKVKRKNRSKS) are enriched in basic residues. 4 ARM repeats span residues 203-243 (PYKI…NNAA), 245-284 (SFNQ…NLSV), 366-406 (PAMT…NIND), and 423-461 (SSLF…LTKL).

It belongs to the eutherian X-chromosome-specific Armcx family. Interacts with MIRO1.

The protein localises to the mitochondrion. The protein resides in the mitochondrion outer membrane. Functionally, regulates mitochondrial transport during axon regeneration. Increases the proportion of motile mitochondria by recruiting stationary mitochondria into the motile pool. Enhances mitochondria movement and neurite growth in both adult axons and embryonic neurons. Promotes neuronal survival and axon regeneration after nerve injury. May link mitochondria to the Trak1-kinesin motor complex via its interaction with MIRO1. The protein is Armadillo repeat-containing X-linked protein 1 (Armcx1) of Rattus norvegicus (Rat).